Consider the following 323-residue polypeptide: Fructose-bisphosphate aldolase (323 aa).

Residue serine 50 participates in beta-D-fructose 1,6-bisphosphate binding. Aspartate 83 serves as the catalytic Proton donor. The Zn(2+) site is built by histidine 84 and histidine 178. Residues histidine 178, glycine 179, and lysine 182 each coordinate beta-D-fructose 1,6-bisphosphate. Histidine 210 serves as a coordination point for Zn(2+). Glycine 211, serine 213, asparagine 253, aspartate 255, serine 256, arginine 259, and arginine 280 together coordinate beta-D-fructose 1,6-bisphosphate.

It belongs to the class II fructose-bisphosphate aldolase family. As to quaternary structure, homodimer. It depends on Zn(2+) as a cofactor.

It carries out the reaction beta-D-fructose 1,6-bisphosphate = D-glyceraldehyde 3-phosphate + dihydroxyacetone phosphate. It functions in the pathway carbohydrate degradation; glycolysis; D-glyceraldehyde 3-phosphate and glycerone phosphate from D-glucose: step 4/4. Its function is as follows. Plays a key role in glycolysis by catalyzing the cleavage of fructose 1,6-bisphosphate into dihydroxyacetone phosphate and glyceraldehyde 3-phosphate. Does not cleave D-tagatose-1,6-bisphosphate. This chain is Fructose-bisphosphate aldolase, found in Giardia intestinalis (strain ATCC 50803 / WB clone C6) (Giardia lamblia).